Reading from the N-terminus, the 231-residue chain is MKRAVVVFSGGQDSTTCLVQALQQYDEVHCVTFDYGQRHRAEIDVARELALKLGARAHKVLDVTLLNELAVSSLTRDSIPVPDYEPEADGIPNTFVPGRNILFLTLAAIYAYQVKAEAVITGVCETDFSGYPDCRDEFVKVLNHAVSLGMAKDIRFETPLMWIDKAETWALADYYGKLDLVRNETLTCYNGIKGDGCGHCAACNLRANGLNHYLADKPTVMAAMKQKTGLK.

Position 8 to 18 (8 to 18) interacts with ATP; sequence FSGGQDSTTCL. Zn(2+) is bound by residues Cys188, Cys197, Cys200, and Cys203.

The protein belongs to the QueC family. The cofactor is Zn(2+).

It carries out the reaction 7-carboxy-7-deazaguanine + NH4(+) + ATP = 7-cyano-7-deazaguanine + ADP + phosphate + H2O + H(+). Its pathway is purine metabolism; 7-cyano-7-deazaguanine biosynthesis. Catalyzes the ATP-dependent conversion of 7-carboxy-7-deazaguanine (CDG) to 7-cyano-7-deazaguanine (preQ(0)). The sequence is that of 7-cyano-7-deazaguanine synthase from Escherichia coli O157:H7.